Here is a 529-residue protein sequence, read N- to C-terminus: Bifunctional purine biosynthesis protein PurH (529 aa).

Positions 1 to 148 (MQQRRPVRRA…KNHKDVAIVV (148 aa)) constitute an MGS-like domain. Lys-287 is modified (N6-acetyllysine).

It belongs to the PurH family.

It carries out the reaction (6R)-10-formyltetrahydrofolate + 5-amino-1-(5-phospho-beta-D-ribosyl)imidazole-4-carboxamide = 5-formamido-1-(5-phospho-D-ribosyl)imidazole-4-carboxamide + (6S)-5,6,7,8-tetrahydrofolate. The enzyme catalyses IMP + H2O = 5-formamido-1-(5-phospho-D-ribosyl)imidazole-4-carboxamide. Its pathway is purine metabolism; IMP biosynthesis via de novo pathway; 5-formamido-1-(5-phospho-D-ribosyl)imidazole-4-carboxamide from 5-amino-1-(5-phospho-D-ribosyl)imidazole-4-carboxamide (10-formyl THF route): step 1/1. The protein operates within purine metabolism; IMP biosynthesis via de novo pathway; IMP from 5-formamido-1-(5-phospho-D-ribosyl)imidazole-4-carboxamide: step 1/1. The polypeptide is Bifunctional purine biosynthesis protein PurH (Escherichia coli O7:K1 (strain IAI39 / ExPEC)).